The chain runs to 101 residues: Small ribosomal subunit protein uS14 (101 aa).

This sequence belongs to the universal ribosomal protein uS14 family. Part of the 30S ribosomal subunit. Contacts proteins S3 and S10.

Binds 16S rRNA, required for the assembly of 30S particles and may also be responsible for determining the conformation of the 16S rRNA at the A site. The polypeptide is Small ribosomal subunit protein uS14 (Ectopseudomonas mendocina (strain ymp) (Pseudomonas mendocina)).